We begin with the raw amino-acid sequence, 358 residues long: MGAIHEETANRSPIPDGHQGAGDRAADHRHSARRAGRWPAPGGVCHFAGADQGGGVAGGQSRMGSSRGTAPRGLRASDGGTAGASSVHRQEVGSRRQEETGTQVMKTLVTAIQKGGQGKTFATCHLAFDFLERGLRVAVIDLDTQGNASFTLSAYQSGYLASQLFTGDTDDLRYWFGKREGESLALIAADANLANLDKMELSQAAAALRASVAALGEFFDVCLIDTAPSLGVAMTAAVLTADYMLSPIEMEAYSLQGMKKMVAVISNLRKQNPKLRFLGMVPNKVDARKPRHVNNLATLQQAYPQLILPFSIGARDSIAEALGEQMPVWKIKKTAARKATQEVRALADYVFTKMEIAQ.

The tract at residues Met-1–Gly-101 is disordered. Residues His-88 to Glu-99 are compositionally biased toward basic and acidic residues.

This sequence belongs to the ParA family.

Its function is as follows. This is one of the proteins encoded by the trfB operon; it is involved in plasmid maintenance and replication. This Escherichia coli protein is Protein IncC (incC).